The following is a 322-amino-acid chain: Putative T-box protein 11 (322 aa).

Residues 16–185 constitute a DNA-binding region (T-box); it reads LWRSCHEYDN…NNPYSTGSRK (170 aa). The segment covering 171–182 has biased composition (polar residues); sequence TLKTNNNPYSTG. The segment at 171 to 214 is disordered; the sequence is TLKTNNNPYSTGSRKDRRRERQSPVYSEGTSSEKSISPPPAKKI.

Its subcellular location is the nucleus. The protein is Putative T-box protein 11 (tbx-11) of Caenorhabditis elegans.